Reading from the N-terminus, the 479-residue chain is UDP-glycosyltransferase 85A8 (479 aa).

Residues serine 302, 358–359, 376–384, and 398–401 each bind UDP-alpha-D-glucose; these read WC, HSGWNSTIE, and FAEQ.

This sequence belongs to the UDP-glycosyltransferase family.

Its function is as follows. May glycosylate diterpenes or flavonols in leaves. This is UDP-glycosyltransferase 85A8 from Stevia rebaudiana (Stevia).